We begin with the raw amino-acid sequence, 113 residues long: Large ribosomal subunit protein bL19 (113 aa).

This sequence belongs to the bacterial ribosomal protein bL19 family.

Its function is as follows. This protein is located at the 30S-50S ribosomal subunit interface and may play a role in the structure and function of the aminoacyl-tRNA binding site. The sequence is that of Large ribosomal subunit protein bL19 from Mycolicibacterium vanbaalenii (strain DSM 7251 / JCM 13017 / BCRC 16820 / KCTC 9966 / NRRL B-24157 / PYR-1) (Mycobacterium vanbaalenii).